The sequence spans 666 residues: Fructose-1,6-bisphosphatase class 3 (666 aa).

Belongs to the FBPase class 3 family. Requires Mn(2+) as cofactor.

The catalysed reaction is beta-D-fructose 1,6-bisphosphate + H2O = beta-D-fructose 6-phosphate + phosphate. The protein operates within carbohydrate biosynthesis; gluconeogenesis. This is Fructose-1,6-bisphosphatase class 3 from Parabacteroides distasonis (strain ATCC 8503 / DSM 20701 / CIP 104284 / JCM 5825 / NCTC 11152).